We begin with the raw amino-acid sequence, 898 residues long: Netrin receptor UNC5A (898 aa).

An N-terminal signal peptide occupies residues 1–25 (MAVRPGLWPALLGIVLTAWLRGSGA). At 26-361 (QQSATVANPV…TSSGPEDVAL (336 aa)) the chain is on the extracellular side. The region spanning 44–141 (PHFLVEPEDV…SGTTKSQKAY (98 aa)) is the Ig-like domain. Disulfide bonds link Cys65–Cys126, Cys77–Cys124, and Cys170–Cys221. Asn107 and Asn218 each carry an N-linked (GlcNAc...) asparagine glycan. The 80-residue stretch at 155-234 (PLAKEVSLEQ…NIVARRRSAS (80 aa)) folds into the Ig-like C2-type domain. TSP type-1 domains are found at residues 242-296 (NGGW…TLCP) and 298-350 (DGSW…DLCL). Trp245, Trp248, and Trp251 each carry a C-linked (Man) tryptophan glycan. 3 cysteine pairs are disulfide-bonded: Cys254-Cys291, Cys258-Cys295, and Cys269-Cys281. 2 C-linked (Man) tryptophan glycosylation sites follow: Trp301 and Trp304. 3 disulfide bridges follow: Cys310-Cys344, Cys314-Cys349, and Cys322-Cys334. Asn343 is a glycosylation site (N-linked (GlcNAc...) asparagine). A helical membrane pass occupies residues 362–382 (YIGLVAVAVCLILLLLVLVLI). Over 383 to 898 (YCRKKEGLDS…GLFTVSEAEC (516 aa)) the chain is Cytoplasmic. The ZU5 domain maps to 497–640 (NMAYGTFNFL…LGRFALVGEA (144 aa)). The interval 661–679 (SLEYNIRVYCLHDTHDALK) is interaction with DCC. One can recognise a Death domain in the interval 817–897 (QKIITSLDPP…AGLFTVSEAE (81 aa)).

This sequence belongs to the unc-5 family. In terms of assembly, homodimer and homooligomer. Interacts with the cytoplasmic part of DCC. Interacts with MAGED1. Interacts with PRKCABP, possibly mediating some interaction with PKC. Interacts (via extracellular domain) with FLRT2 (via extracellular domain). Interacts (via extracellular domain) with FLRT3 (via extracellular domain). In terms of processing, phosphorylated on cytoplasmic tyrosine residues. Phosphorylated by PKC in vitro. Post-translationally, proteolytically cleaved by caspases during apoptosis. The cleavage does not take place when the receptor is associated with netrin ligand. Its cleavage by caspases is required to induce apoptosis. The two extracellular TSRs of UNC5A contain WxxWxxWxxC motifs that can be C-mannosylated on all tryptophans. DPY19L1 preferentially mannosylates the first two tryptophans and DPY19L3 prefers the third. C-mannosylation by DPY19L1 is required for transport of UNC5A from the endoplasmic reticulum to the cell surface. In terms of tissue distribution, restricted to central nervous system.

It is found in the cell membrane. The protein localises to the membrane raft. The protein resides in the cell projection. Its subcellular location is the neuron projection. In terms of biological role, receptor for netrin required for axon guidance. Functions in the netrin signaling pathway and promotes neurite outgrowth in response to NTN1. Mediates axon repulsion of neuronal growth cones in the developing nervous system in response to netrin. Axon repulsion in growth cones may be mediated by its association with DCC that may trigger signaling for repulsion. It also acts as a dependence receptor required for apoptosis induction when not associated with netrin ligand. The protein is Netrin receptor UNC5A (Unc5a) of Mus musculus (Mouse).